We begin with the raw amino-acid sequence, 207 residues long: SPRY domain-containing protein 4 (207 aa).

The B30.2/SPRY domain occupies 12 to 206 (CRWGAKRLGV…THSGLEVPEG (195 aa)). N6-acetyllysine is present on residues K53 and K130. At K139 the chain carries N6-succinyllysine.

This Homo sapiens (Human) protein is SPRY domain-containing protein 4 (SPRYD4).